A 417-amino-acid polypeptide reads, in one-letter code: Probable secreted aspartic protease ARB_07536 (417 aa).

An N-terminal signal peptide occupies residues 1–20 (MRGILILVALGAATIPQASA). Positions 42 to 413 (NTDLVTIGTP…DFEKNRVGLA (372 aa)) constitute a Peptidase A1 domain. Residues N74, N91, N100, N170, N276, and N314 are each glycosylated (N-linked (GlcNAc...) asparagine). Cysteines 333 and 373 form a disulfide.

The protein belongs to the peptidase A1 family.

The protein localises to the secreted. Its function is as follows. Probable secreted aspartic protease that supplies the fungus with nutrient amino acids. May be able to degrade the selected host's proteins involved in the immune defense. The chain is Probable secreted aspartic protease ARB_07536 from Arthroderma benhamiae (strain ATCC MYA-4681 / CBS 112371) (Trichophyton mentagrophytes).